Consider the following 132-residue polypeptide: uncharacterized protein (132 aa).

The interval 1 to 34 (MTAGAGGSPPTRRCPATEDRAPATVATPSSADPT) is disordered.

The protein to M.tuberculosis Rv2656c.

This is an uncharacterized protein from Mycobacterium tuberculosis (strain CDC 1551 / Oshkosh).